The following is a 195-amino-acid chain: FMN-dependent NADH:quinone oxidoreductase (195 aa).

FMN-binding positions include serine 10, 16-18, and 91-94; these read SQS and MYNF.

This sequence belongs to the azoreductase type 1 family. Homodimer. FMN serves as cofactor.

It carries out the reaction 2 a quinone + NADH + H(+) = 2 a 1,4-benzosemiquinone + NAD(+). It catalyses the reaction N,N-dimethyl-1,4-phenylenediamine + anthranilate + 2 NAD(+) = 2-(4-dimethylaminophenyl)diazenylbenzoate + 2 NADH + 2 H(+). Quinone reductase that provides resistance to thiol-specific stress caused by electrophilic quinones. Functionally, also exhibits azoreductase activity. Catalyzes the reductive cleavage of the azo bond in aromatic azo compounds to the corresponding amines. The polypeptide is FMN-dependent NADH:quinone oxidoreductase (Aeromonas salmonicida (strain A449)).